Here is a 244-residue protein sequence, read N- to C-terminus: MHDSDTDLIYSQAHNQVKNFTFDAQVVEVFPDMISRSVPGYKTIIDTIGRLSERFTQDDSNIYDLGCSLGAATLAMRKGITANNCKIIGVDNSIDMVKRCKMHVDAFKGDTPVTIIEGNIQDIDIENASMVVLNFTLQFIEKSQRQALLSKIAQGLKPGGLLVLSEKISSDDNVIDDVLINLHHNFKRDNGYSELEVAQKRSALEKVMLTDSLDVHKERLTQAGFQHVSLWFQCFNFTSLIAIK.

S-adenosyl-L-methionine is bound by residues tyrosine 41, glycine 66–serine 68, aspartate 91–asparagine 92, asparagine 134, and arginine 201.

This sequence belongs to the class I-like SAM-binding methyltransferase superfamily. Cx-SAM synthase family. As to quaternary structure, homodimer.

The catalysed reaction is prephenate + S-adenosyl-L-methionine = carboxy-S-adenosyl-L-methionine + 3-phenylpyruvate + H2O. Its function is as follows. Catalyzes the conversion of S-adenosyl-L-methionine (SAM) to carboxy-S-adenosyl-L-methionine (Cx-SAM). The sequence is that of Carboxy-S-adenosyl-L-methionine synthase from Colwellia psychrerythraea (strain 34H / ATCC BAA-681) (Vibrio psychroerythus).